We begin with the raw amino-acid sequence, 147 residues long: Hemoglobin subunit epsilon (147 aa).

Positions 3-147 (HFTAEEKTAI…VASALAHKYH (145 aa)) constitute a Globin domain. A phosphoserine mark is found at Ser-14 and Ser-51. Heme b-binding residues include His-64 and His-93.

It belongs to the globin family. As to expression, red blood cells.

Functionally, hemoglobin epsilon chain is an embryonic-type beta-type chain found in prenatal and neonatal marsupials. This is Hemoglobin subunit epsilon (HBE1) from Notamacropus eugenii (Tammar wallaby).